The sequence spans 682 residues: Potassium-transporting ATPase ATP-binding subunit (682 aa).

4 helical membrane passes run Pro-34–Val-54, Ile-58–Phe-78, Ile-219–Leu-239, and Val-254–Ile-274. Asp-307 acts as the 4-aspartylphosphate intermediate in catalysis. Residues Asp-344, Glu-348, Phe-377 to Ser-384, and Lys-395 contribute to the ATP site. The Mg(2+) site is built by Asp-518 and Asp-522. The next 3 membrane-spanning stretches (helical) occupy residues Phe-588 to Met-608, Ala-616 to Leu-636, and Leu-662 to Ala-682.

This sequence belongs to the cation transport ATPase (P-type) (TC 3.A.3) family. Type IA subfamily. The system is composed of three essential subunits: KdpA, KdpB and KdpC.

It localises to the cell inner membrane. The enzyme catalyses K(+)(out) + ATP + H2O = K(+)(in) + ADP + phosphate + H(+). Its function is as follows. Part of the high-affinity ATP-driven potassium transport (or Kdp) system, which catalyzes the hydrolysis of ATP coupled with the electrogenic transport of potassium into the cytoplasm. This subunit is responsible for energy coupling to the transport system and for the release of the potassium ions to the cytoplasm. The chain is Potassium-transporting ATPase ATP-binding subunit from Salmonella newport (strain SL254).